Reading from the N-terminus, the 103-residue chain is Gene 56 protein (103 aa).

The 95-residue stretch at 9–103 folds into the Glutaredoxin domain; sequence WDGAHVRTLF…DYYTASETGL (95 aa).

This is Gene 56 protein (56) from Mycobacterium phage L5 (Mycobacteriophage L5).